Reading from the N-terminus, the 336-residue chain is uncharacterized protein (336 aa).

Positions 162–195 (ARGLPVHSSFKQNNSSQTSSNKGTTTVAAGSGSD) are disordered. Positions 169–187 (SSFKQNNSSQTSSNKGTTT) are enriched in low complexity.

The protein belongs to the AHA1 family.

This is an uncharacterized protein from Schizosaccharomyces pombe (strain 972 / ATCC 24843) (Fission yeast).